The sequence spans 443 residues: SURP and G-patch domain-containing protein 1-like protein (443 aa).

Disordered regions lie at residues 45-71 (IISN…KGGK) and 83-141 (LAPP…TVKK). The stretch at 142-185 (VADKLASFVAKHGRPFEHITRQKNPGDTPFKFLFDENCADYKYY) is one SURP motif repeat. Disordered stretches follow at residues 198–221 (QTKD…AIPL), 241–272 (TPVE…RGAD), and 285–325 (AQEE…HHMG). Residues 248–265 (SSRSAQASITRPSDSDSF) show a composition bias toward polar residues. The span at 285-300 (AQEEKMRRPRQSKDEM) shows a compositional bias: basic and acidic residues. Over residues 307–316 (QGPSETSSTD) the composition is skewed to polar residues. Positions 360 to 407 (ADNVGHKLLSKMGWKEGEGIGSSRKGMADPIMAGDVKTNNLGVGASAP) constitute a G-patch domain.

It localises to the nucleus. The sequence is that of SURP and G-patch domain-containing protein 1-like protein from Arabidopsis thaliana (Mouse-ear cress).